We begin with the raw amino-acid sequence, 411 residues long: Branched-chain-amino-acid aminotransferase, cytosolic (411 aa).

An N6-(pyridoxal phosphate)lysine modification is found at lysine 247.

Belongs to the class-IV pyridoxal-phosphate-dependent aminotransferase family. Homodimer. Requires pyridoxal 5'-phosphate as cofactor. Post-translationally, the N-terminus is blocked. In terms of tissue distribution, brain, low expression in ovary and placenta, but not found in liver, kidney, and skeletal muscle.

It is found in the cytoplasm. The catalysed reaction is L-leucine + 2-oxoglutarate = 4-methyl-2-oxopentanoate + L-glutamate. It carries out the reaction L-isoleucine + 2-oxoglutarate = (S)-3-methyl-2-oxopentanoate + L-glutamate. It catalyses the reaction L-valine + 2-oxoglutarate = 3-methyl-2-oxobutanoate + L-glutamate. In terms of biological role, catalyzes the first reaction in the catabolism of the essential branched chain amino acids leucine, isoleucine, and valine. The chain is Branched-chain-amino-acid aminotransferase, cytosolic (Bcat1) from Rattus norvegicus (Rat).